Here is a 377-residue protein sequence, read N- to C-terminus: WAT1-related protein At3g56620 (377 aa).

Transmembrane regions (helical) follow at residues 13-33 (FAMV…KVVL), 40-60 (YVLV…FALL), 67-87 (PKMT…GPLI), 102-122 (TFAG…SIIC), 142-162 (LVIV…ITFL), 183-203 (VFLL…AATL), 210-230 (LSLS…LTFV), 235-255 (LSAW…AGIM), 274-294 (IFVT…GFLI), and 299-319 (LNLG…TVLW). EamA domains follow at residues 22 to 152 (YAGM…MLMI) and 190 to 318 (FSWA…CTVL).

Belongs to the drug/metabolite transporter (DMT) superfamily. Plant drug/metabolite exporter (P-DME) (TC 2.A.7.4) family.

Its subcellular location is the membrane. In Arabidopsis thaliana (Mouse-ear cress), this protein is WAT1-related protein At3g56620.